Reading from the N-terminus, the 336-residue chain is Glycerol-3-phosphate dehydrogenase [NAD(P)+] (336 aa).

5 residues coordinate NADPH: S14, W15, R35, R36, and K109. Residues K109 and G139 each contribute to the sn-glycerol 3-phosphate site. An NADPH-binding site is contributed by A143. Sn-glycerol 3-phosphate-binding residues include K194, D247, S257, R258, and N259. K194 (proton acceptor) is an active-site residue. Position 258 (R258) interacts with NADPH. E284 provides a ligand contact to NADPH.

The protein belongs to the NAD-dependent glycerol-3-phosphate dehydrogenase family.

It is found in the cytoplasm. The catalysed reaction is sn-glycerol 3-phosphate + NAD(+) = dihydroxyacetone phosphate + NADH + H(+). It catalyses the reaction sn-glycerol 3-phosphate + NADP(+) = dihydroxyacetone phosphate + NADPH + H(+). It functions in the pathway membrane lipid metabolism; glycerophospholipid metabolism. In terms of biological role, catalyzes the reduction of the glycolytic intermediate dihydroxyacetone phosphate (DHAP) to sn-glycerol 3-phosphate (G3P), the key precursor for phospholipid synthesis. In Streptomyces avermitilis (strain ATCC 31267 / DSM 46492 / JCM 5070 / NBRC 14893 / NCIMB 12804 / NRRL 8165 / MA-4680), this protein is Glycerol-3-phosphate dehydrogenase [NAD(P)+].